A 325-amino-acid polypeptide reads, in one-letter code: Elongation factor P--(R)-beta-lysine ligase (325 aa).

A substrate-binding site is contributed by 76-78 (SPE). ATP-binding positions include 100–102 (RNE) and N109. Position 118 (Y118) interacts with substrate. Residue 244 to 245 (EL) coordinates ATP. A substrate-binding site is contributed by E251. G300 contacts ATP.

It belongs to the class-II aminoacyl-tRNA synthetase family. EpmA subfamily. As to quaternary structure, homodimer.

It carries out the reaction D-beta-lysine + L-lysyl-[protein] + ATP = N(6)-((3R)-3,6-diaminohexanoyl)-L-lysyl-[protein] + AMP + diphosphate + H(+). With EpmB is involved in the beta-lysylation step of the post-translational modification of translation elongation factor P (EF-P). Catalyzes the ATP-dependent activation of (R)-beta-lysine produced by EpmB, forming a lysyl-adenylate, from which the beta-lysyl moiety is then transferred to the epsilon-amino group of a conserved specific lysine residue in EF-P. This is Elongation factor P--(R)-beta-lysine ligase from Klebsiella pneumoniae (strain 342).